The following is a 266-amino-acid chain: Undecaprenyl-diphosphatase (266 aa).

7 helical membrane-spanning segments follow: residues 41–61, 82–102, 106–126, 159–179, 191–211, 213–233, and 246–266; these read YAYS…LIYF, LVYI…LYYV, WLVV…AVVL, AVSV…LLLL, FVLV…SEGG, VATA…IITI, and VLVN…RIIF.

It belongs to the UppP family.

The protein resides in the cell membrane. It catalyses the reaction di-trans,octa-cis-undecaprenyl diphosphate + H2O = di-trans,octa-cis-undecaprenyl phosphate + phosphate + H(+). Functionally, catalyzes the dephosphorylation of undecaprenyl diphosphate (UPP). This Pyrobaculum aerophilum (strain ATCC 51768 / DSM 7523 / JCM 9630 / CIP 104966 / NBRC 100827 / IM2) protein is Undecaprenyl-diphosphatase.